Consider the following 266-residue polypeptide: PTS system mannose-specific EIIC component (266 aa).

An N-formylmethionine modification is found at Met-1. Residues Met-1–Thr-4 are Periplasmic-facing. Residues Met-1 to Leu-237 enclose the PTS EIIC type-4 domain. Residues Thr-5–Leu-43 lie within the membrane without spanning it. Topologically, residues Gly-44–Met-46 are periplasmic. An intramembrane segment occupies Lys-47–Ile-86. Topologically, residues Ala-87 to Gln-90 are periplasmic. A transmembrane helix spans residues Ser-91–Ala-124. The Cytoplasmic portion of the chain corresponds to Asp-125–Asn-132. Residues Leu-133 to Leu-160 are membrane-embedded. The Periplasmic portion of the chain corresponds to Ser-161–Glu-176. The segment at Val-177–Met-200 is a transmembrane helix. Topologically, residues Met-201–Met-207 are cytoplasmic. Residues Pro-208 to Ala-218 are membrane-embedded. Residues Phe-219–Leu-224 lie on the Periplasmic side of the membrane. The chain crosses the lipid bilayer at residues Val-225 to Ser-242. At Pro-243 to Asp-266 the chain is on the cytoplasmic side.

As to quaternary structure, homotrimer of protomers that are composed of two subunits, IIC and IID.

It is found in the cell inner membrane. The phosphoenolpyruvate-dependent sugar phosphotransferase system (sugar PTS), a major carbohydrate active transport system, catalyzes the phosphorylation of incoming sugar substrates concomitantly with their translocation across the cell membrane. The enzyme II ManXYZ PTS system is involved in mannose transport. This chain is PTS system mannose-specific EIIC component (manY), found in Escherichia coli O157:H7.